Consider the following 54-residue polypeptide: UPF0391 membrane protein Aave_3864 (54 aa).

2 helical membrane passes run 5 to 25 and 28 to 48; these read AVVF…GIAA and VGIA…TFVL.

It belongs to the UPF0391 family.

The protein localises to the cell membrane. The chain is UPF0391 membrane protein Aave_3864 from Paracidovorax citrulli (strain AAC00-1) (Acidovorax citrulli).